Here is a 351-residue protein sequence, read N- to C-terminus: AA9 family lytic polysaccharide monooxygenase A (351 aa).

Residues 1–20 (MSNKAATLLAALSGAALVAA) form the signal peptide. Positions 21 and 107 each coordinate Cu(2+). A disulfide bond links C76 and C196. O2-binding residues include H182 and Q191. Position 193 (Y193) interacts with Cu(2+). A CBM1 domain is found at 315–351 (GVAPKWGQCGGNGWTGPTVCASGSTCTVLNPYYSQCI).

Belongs to the polysaccharide monooxygenase AA9 family. It depends on Cu(2+) as a cofactor.

Its subcellular location is the secreted. The enzyme catalyses [(1-&gt;4)-beta-D-glucosyl]n+m + reduced acceptor + O2 = 4-dehydro-beta-D-glucosyl-[(1-&gt;4)-beta-D-glucosyl]n-1 + [(1-&gt;4)-beta-D-glucosyl]m + acceptor + H2O.. Its function is as follows. Lytic polysaccharide monooxygenase (LPMO) that depolymerizes crystalline and amorphous polysaccharides via the oxidation of scissile alpha- or beta-(1-4)-glycosidic bonds, yielding C1 and C4 oxidation products. Catalysis by LPMOs requires the reduction of the active-site copper from Cu(II) to Cu(I) by a reducing agent and H(2)O(2) or O(2) as a cosubstrate. In Podospora anserina (strain S / ATCC MYA-4624 / DSM 980 / FGSC 10383) (Pleurage anserina), this protein is AA9 family lytic polysaccharide monooxygenase A.